Consider the following 306-residue polypeptide: Pantothenate kinase (306 aa).

Position 91–98 (91–98 (GSVAVGKS)) interacts with ATP.

The protein belongs to the prokaryotic pantothenate kinase family.

It is found in the cytoplasm. It catalyses the reaction (R)-pantothenate + ATP = (R)-4'-phosphopantothenate + ADP + H(+). It functions in the pathway cofactor biosynthesis; coenzyme A biosynthesis; CoA from (R)-pantothenate: step 1/5. This is Pantothenate kinase from Streptococcus equi subsp. equi (strain 4047).